Reading from the N-terminus, the 535-residue chain is Probable acyl-activating enzyme 22 (535 aa).

The protein belongs to the ATP-dependent AMP-binding enzyme family.

Its function is as follows. May act as an acid--thiol ligase that activates carboxylic acids by forming acyl-CoAs. In Arabidopsis thaliana (Mouse-ear cress), this protein is Probable acyl-activating enzyme 22 (AEE22).